The primary structure comprises 100 residues: Small ribosomal subunit protein uS14c (100 aa).

The protein belongs to the universal ribosomal protein uS14 family. As to quaternary structure, part of the 30S ribosomal subunit.

The protein resides in the plastid. Binds 16S rRNA, required for the assembly of 30S particles. The protein is Small ribosomal subunit protein uS14c of Euglena longa (Euglenophycean alga).